The chain runs to 283 residues: Arsenite methyltransferase (283 aa).

The protein belongs to the methyltransferase superfamily. Arsenite methyltransferase family.

The catalysed reaction is arsenic triglutathione + [thioredoxin]-dithiol + S-adenosyl-L-methionine + 2 H2O = methylarsonous acid + [thioredoxin]-disulfide + 3 glutathione + S-adenosyl-L-homocysteine + H(+). It carries out the reaction arsenic triglutathione + 2 [thioredoxin]-dithiol + 2 S-adenosyl-L-methionine + H2O = dimethylarsinous acid + 2 [thioredoxin]-disulfide + 3 glutathione + 2 S-adenosyl-L-homocysteine + 2 H(+). The enzyme catalyses arsenic triglutathione + 3 [thioredoxin]-dithiol + 3 S-adenosyl-L-methionine = trimethylarsine + 3 [thioredoxin]-disulfide + 3 glutathione + 3 S-adenosyl-L-homocysteine + 3 H(+). Catalyzes the transfer of a methyl group from AdoMet to arsenite, producing methylated arsenicals. Involved in the conversion of As(III) to a number of di- and trimethylated species, with trimethylarsine as the end product. Reduces the arsenic toxicity in the cell and may contribute to the global arsenic cycling. This Rhodopseudomonas palustris (strain ATCC BAA-98 / CGA009) protein is Arsenite methyltransferase.